The sequence spans 332 residues: MNWLQLADEVIAGKVISDDEALAILNSDDDDILKLMDGAFAIRKHYYGKKVKLNMIMNAKSGYCPEDCGYCSQSSKSTAPIEKYPFITKEEILAGAKRAFENKIGTYCIVASGRGPTRKDVNVVSEAVEEIKAKYGLKVCACLGLLKEEQAQQLKEAGVDRYNHNLNTSERHHSYITTTHTYEDRVNTVEVVKKHGISPCSGAIIGMKETKMDVVEIARALHQLDADSIPVNFLHAIDGTKLEGTQDLNPRYCLKVLALFRYMNPSKEIRISGGREVNLGFLQPFGLYAANSIFVGDYLTTEGQEANSDYRMLEDLGFEIELTQKQEEAFCS.

The 230-residue stretch at 46 to 275 (YYGKKVKLNM…SKEIRISGGR (230 aa)) folds into the Radical SAM core domain. Residues cysteine 64, cysteine 68, and cysteine 71 each contribute to the [4Fe-4S] cluster site. 4 residues coordinate [2Fe-2S] cluster: cysteine 108, cysteine 140, cysteine 200, and arginine 270.

Belongs to the radical SAM superfamily. Biotin synthase family. In terms of assembly, homodimer. It depends on [4Fe-4S] cluster as a cofactor. [2Fe-2S] cluster serves as cofactor.

It carries out the reaction (4R,5S)-dethiobiotin + (sulfur carrier)-SH + 2 reduced [2Fe-2S]-[ferredoxin] + 2 S-adenosyl-L-methionine = (sulfur carrier)-H + biotin + 2 5'-deoxyadenosine + 2 L-methionine + 2 oxidized [2Fe-2S]-[ferredoxin]. Its pathway is cofactor biosynthesis; biotin biosynthesis; biotin from 7,8-diaminononanoate: step 2/2. Its function is as follows. Catalyzes the conversion of dethiobiotin (DTB) to biotin by the insertion of a sulfur atom into dethiobiotin via a radical-based mechanism. This Lysinibacillus sphaericus (Bacillus sphaericus) protein is Biotin synthase.